The primary structure comprises 444 residues: L-ornithine N(5)-monooxygenase (444 aa).

Residues 40-48 (ERQPAFGWH) and glutamine 59 contribute to the FAD site. Lysine 64 provides a ligand contact to substrate. Valine 125 is an FAD binding site. Residues 211–214 (AGQS) and arginine 236 contribute to the NADP(+) site. Substrate is bound by residues 250 to 253 (NEIF) and asparagine 280. Residue 280–282 (NYA) coordinates NADP(+). An FAD-binding site is contributed by 408–410 (RCC). Residues 420-432 (SARRSKTGSRPRT) are compositionally biased toward basic residues. Residues 420–444 (SARRSKTGSRPRTMKAWPGPRTKND) form a disordered region.

The protein belongs to the lysine N(6)-hydroxylase/L-ornithine N(5)-oxygenase family. It depends on FAD as a cofactor.

It catalyses the reaction L-ornithine + NADPH + O2 = N(5)-hydroxy-L-ornithine + NADP(+) + H2O. The protein operates within siderophore biosynthesis; ornibactin biosynthesis. In terms of biological role, catalyzes the conversion of L-ornithine to N(5)-hydroxyornithine, the first step in the biosynthesis of all hydroxamate-containing siderophores, such as ornibactin. This chain is L-ornithine N(5)-monooxygenase, found in Burkholderia cepacia (Pseudomonas cepacia).